Consider the following 163-residue polypeptide: Ureidoglycolate lyase 2 (163 aa).

The protein belongs to the ureidoglycolate lyase family. As to quaternary structure, homodimer. Ni(2+) serves as cofactor.

It carries out the reaction (S)-ureidoglycolate = urea + glyoxylate. Its pathway is nitrogen metabolism; (S)-allantoin degradation. In terms of biological role, catalyzes the catabolism of the allantoin degradation intermediate (S)-ureidoglycolate, generating urea and glyoxylate. Involved in the utilization of allantoin as nitrogen source. This is Ureidoglycolate lyase 2 from Rhizobium meliloti (strain 1021) (Ensifer meliloti).